An 84-amino-acid polypeptide reads, in one-letter code: MSCCGGNCGCGSGCQCGNGCGGCKMFPDFGSDEKITTTHTLVLGFAPAKGSVEGFEMVAGAAENDCKCGSNCSCTDCRCDPCNC.

It belongs to the metallothionein superfamily. Type 15 family. Expressed in leaves, stems and roots.

Its subcellular location is the cytoplasm. It is found in the nucleus. Its function is as follows. Metallothioneins have a high content of cysteine residues that bind various heavy metals. Probably involved in maintaining homeostasis of essential transition metals and detoxification of toxic metals. Increases cadmium and zinc tolerance when expressed in heterologous systems. Metal chelator binding 6 cadmium or 5 zinc atoms per protein. The sequence is that of Metallothionein type 2b from Colocasia esculenta (Wild taro).